Here is a 217-residue protein sequence, read N- to C-terminus: UPF0502 protein VIBHAR_05349 (217 aa).

Belongs to the UPF0502 family.

The sequence is that of UPF0502 protein VIBHAR_05349 from Vibrio campbellii (strain ATCC BAA-1116).